Here is a 64-residue protein sequence, read N- to C-terminus: Large ribosomal subunit protein bL33 (64 aa).

The protein belongs to the bacterial ribosomal protein bL33 family.

This chain is Large ribosomal subunit protein bL33, found in Synechococcus sp. (strain JA-3-3Ab) (Cyanobacteria bacterium Yellowstone A-Prime).